The primary structure comprises 497 residues: Carboxylesterase (497 aa).

Ser185 serves as the catalytic Acyl-ester intermediate. Active-site charge relay system residues include Glu319 and His415.

Belongs to the type-B carboxylesterase/lipase family.

The protein localises to the secreted. The enzyme catalyses a carboxylic ester + H2O = an alcohol + a carboxylate + H(+). The chain is Carboxylesterase from Thermobifida fusca (strain YX).